Consider the following 413-residue polypeptide: Queuine tRNA-ribosyltransferase accessory subunit 2 (413 aa).

The interval 298–321 is disordered; it reads LEKSETSGAERNGDVGAESEEPDA. Residues cysteine 349, cysteine 351, cysteine 354, and histidine 380 each coordinate Zn(2+).

It belongs to the queuine tRNA-ribosyltransferase family. QTRT2 subfamily. In terms of assembly, heterodimer of a catalytic subunit qtrt1 and an accessory subunit qtrt2. Requires Zn(2+) as cofactor.

The protein resides in the cytoplasm. Its subcellular location is the mitochondrion outer membrane. Its function is as follows. Non-catalytic subunit of the queuine tRNA-ribosyltransferase (TGT) that catalyzes the base-exchange of a guanine (G) residue with queuine (Q) at position 34 (anticodon wobble position) in tRNAs with GU(N) anticodons (tRNA-Asp, -Asn, -His and -Tyr), resulting in the hypermodified nucleoside queuosine (7-(((4,5-cis-dihydroxy-2-cyclopenten-1-yl)amino)methyl)-7-deazaguanosine). This Xenopus tropicalis (Western clawed frog) protein is Queuine tRNA-ribosyltransferase accessory subunit 2.